Here is a 222-residue protein sequence, read N- to C-terminus: Elongation factor 1-beta' (222 aa).

The tract at residues 71-113 is disordered; it reads SQGTSPLTAGAKPTAPAPAAKDDDDDDVDLFGSGDEEEDAEAE. The segment covering 78–89 has biased composition (low complexity); it reads TAGAKPTAPAPA. Acidic residues predominate over residues 92-111; the sequence is DDDDDDVDLFGSGDEEEDAE.

This sequence belongs to the EF-1-beta/EF-1-delta family. EF-1 is composed of 4 subunits: alpha, beta, beta' and gamma. Post-translationally, phosphorylated.

Functionally, EF-1-beta and EF-1-beta' stimulate the exchange of GDP bound to EF-1-alpha to GTP. The chain is Elongation factor 1-beta' from Bombyx mori (Silk moth).